A 414-amino-acid polypeptide reads, in one-letter code: Enolase (414 aa).

Gln162 lines the (2R)-2-phosphoglycerate pocket. The active-site Proton donor is Glu204. The Mg(2+) site is built by Asp239, Glu280, and Asp307. Lys332, Arg361, Ser362, and Lys383 together coordinate (2R)-2-phosphoglycerate. Lys332 acts as the Proton acceptor in catalysis.

Belongs to the enolase family. Mg(2+) serves as cofactor.

The protein localises to the cytoplasm. It localises to the secreted. Its subcellular location is the cell surface. It carries out the reaction (2R)-2-phosphoglycerate = phosphoenolpyruvate + H2O. Its pathway is carbohydrate degradation; glycolysis; pyruvate from D-glyceraldehyde 3-phosphate: step 4/5. In terms of biological role, catalyzes the reversible conversion of 2-phosphoglycerate (2-PG) into phosphoenolpyruvate (PEP). It is essential for the degradation of carbohydrates via glycolysis. In Campylobacter jejuni subsp. jejuni serotype O:6 (strain 81116 / NCTC 11828), this protein is Enolase.